We begin with the raw amino-acid sequence, 546 residues long: Glutamate--tRNA ligase (546 aa).

Residues 42–52 (PSPTGFIHLGN) carry the 'HIGH' region motif. The short motif at 293–297 (KLSKR) is the 'KMSKS' region element. Lysine 296 contacts ATP.

The protein belongs to the class-I aminoacyl-tRNA synthetase family. Glutamate--tRNA ligase type 1 subfamily. As to quaternary structure, monomer.

The protein resides in the cytoplasm. The enzyme catalyses tRNA(Glu) + L-glutamate + ATP = L-glutamyl-tRNA(Glu) + AMP + diphosphate. Functionally, catalyzes the attachment of glutamate to tRNA(Glu) in a two-step reaction: glutamate is first activated by ATP to form Glu-AMP and then transferred to the acceptor end of tRNA(Glu). This is Glutamate--tRNA ligase from Acetivibrio thermocellus (strain ATCC 27405 / DSM 1237 / JCM 9322 / NBRC 103400 / NCIMB 10682 / NRRL B-4536 / VPI 7372) (Clostridium thermocellum).